The primary structure comprises 270 residues: MVQQGFSIDLILARSKEEAADGKDSMSSRPHIPCAPQPLPPTKYAKEMPRRKDGQDVQEHTTSFQCSLGEQGNKLQYFSPSPAALHRTWGSSDEFSSAGSEDDTNECSPRPVRNFQDTDHNGKSTKSDRRLRTAFSPQQISKLEQAFNKQRYLGASERKKLATSLMLSEIQVKTWFQNRRMKLKRQIQDQQHSLVPPPVCYPQTFPYYPGGFPVPLNSGSFYQPPALPFQAPQHSYIPDQRFIPQPLPHHVRMSGALQEQYPPLFRAQYI.

Composition is skewed to basic and acidic residues over residues 17 to 26 (EEAADGKDSM) and 44 to 59 (YAKE…DVQE). 2 disordered regions span residues 17–66 (EEAA…SFQC) and 88–134 (TWGS…LRTA). Residues 89 to 99 (WGSSDEFSSAG) show a composition bias toward polar residues. A compositionally biased stretch (basic and acidic residues) spans 116–131 (QDTDHNGKSTKSDRRL). Positions 128 to 187 (DRRLRTAFSPQQISKLEQAFNKQRYLGASERKKLATSLMLSEIQVKTWFQNRRMKLKRQI) form a DNA-binding region, homeobox.

Expressed in the ventral marginal zone of gastrulae. At the end of gastrulation, predominantly localized to the ventral region of the closing slit blastopore. At early tail bud stage, expression is maintained only in the forming proctodeum.

Its subcellular location is the nucleus. Its function is as follows. Probable transcription regulator. Acts in a ventral signaling pathway downstream of bmp4 and vent2B. The sequence is that of Homeobox protein vent1B (vent1B) from Xenopus laevis (African clawed frog).